The chain runs to 540 residues: Suppressor of tumorigenicity 7 protein-like (540 aa).

A run of 4 helical transmembrane segments spans residues 24-44, 68-88, 475-495, and 502-522; these read WSWT…VYVL, FYVA…IFEW, LPFF…LAML, and LMGV…GFFA.

Belongs to the ST7 family.

It localises to the membrane. This chain is Suppressor of tumorigenicity 7 protein-like (st7l), found in Danio rerio (Zebrafish).